The primary structure comprises 127 residues: Putative defensin-like protein 180 (127 aa).

Positions methionine 1–alanine 26 are cleaved as a signal peptide. Intrachain disulfides connect cysteine 29-cysteine 70, cysteine 36-cysteine 55, cysteine 39-cysteine 64, cysteine 43-cysteine 66, cysteine 81-cysteine 127, cysteine 92-cysteine 112, cysteine 97-cysteine 121, and cysteine 101-cysteine 123.

It belongs to the DEFL family.

Its subcellular location is the secreted. This chain is Putative defensin-like protein 180 (LCR58), found in Arabidopsis thaliana (Mouse-ear cress).